The sequence spans 402 residues: 4-hydroxy-3-methylbut-2-enyl diphosphate reductase (402 aa).

Cysteine 66 lines the [4Fe-4S] cluster pocket. Residue histidine 96 coordinates (2E)-4-hydroxy-3-methylbut-2-enyl diphosphate. Histidine 96 is a dimethylallyl diphosphate binding site. Histidine 96 contacts isopentenyl diphosphate. Cysteine 157 lines the [4Fe-4S] cluster pocket. Histidine 185 contacts (2E)-4-hydroxy-3-methylbut-2-enyl diphosphate. Histidine 185 contributes to the dimethylallyl diphosphate binding site. Isopentenyl diphosphate is bound at residue histidine 185. Catalysis depends on glutamate 187, which acts as the Proton donor. Threonine 250 provides a ligand contact to (2E)-4-hydroxy-3-methylbut-2-enyl diphosphate. A [4Fe-4S] cluster-binding site is contributed by cysteine 288. The (2E)-4-hydroxy-3-methylbut-2-enyl diphosphate site is built by serine 317, serine 318, asparagine 319, and serine 379. The dimethylallyl diphosphate site is built by serine 317, serine 318, asparagine 319, and serine 379. Isopentenyl diphosphate contacts are provided by serine 317, serine 318, asparagine 319, and serine 379.

Belongs to the IspH family. It depends on [4Fe-4S] cluster as a cofactor.

The enzyme catalyses isopentenyl diphosphate + 2 oxidized [2Fe-2S]-[ferredoxin] + H2O = (2E)-4-hydroxy-3-methylbut-2-enyl diphosphate + 2 reduced [2Fe-2S]-[ferredoxin] + 2 H(+). The catalysed reaction is dimethylallyl diphosphate + 2 oxidized [2Fe-2S]-[ferredoxin] + H2O = (2E)-4-hydroxy-3-methylbut-2-enyl diphosphate + 2 reduced [2Fe-2S]-[ferredoxin] + 2 H(+). The protein operates within isoprenoid biosynthesis; dimethylallyl diphosphate biosynthesis; dimethylallyl diphosphate from (2E)-4-hydroxy-3-methylbutenyl diphosphate: step 1/1. It functions in the pathway isoprenoid biosynthesis; isopentenyl diphosphate biosynthesis via DXP pathway; isopentenyl diphosphate from 1-deoxy-D-xylulose 5-phosphate: step 6/6. Functionally, catalyzes the conversion of 1-hydroxy-2-methyl-2-(E)-butenyl 4-diphosphate (HMBPP) into a mixture of isopentenyl diphosphate (IPP) and dimethylallyl diphosphate (DMAPP). Acts in the terminal step of the DOXP/MEP pathway for isoprenoid precursor biosynthesis. The sequence is that of 4-hydroxy-3-methylbut-2-enyl diphosphate reductase from Trichormus variabilis (strain ATCC 29413 / PCC 7937) (Anabaena variabilis).